The sequence spans 256 residues: uncharacterized protein (256 aa).

A run of 7 helical transmembrane segments spans residues 32 to 52 (ILAS…GSYF), 59 to 79 (FAFP…AYGG), 112 to 132 (YAGN…TGLF), 156 to 176 (LFFR…IPMS), 184 to 204 (LFTM…HSIA), 207 to 227 (CTFA…MGAV), and 230 to 250 (LIPV…WMYY).

The protein belongs to the FNT transporter (TC 1.A.16) family.

Its subcellular location is the cell membrane. This is an uncharacterized protein from Bacillus subtilis (strain 168).